We begin with the raw amino-acid sequence, 226 residues long: Agamous-like MADS-box protein AGL23 (226 aa).

The MADS-box domain maps to leucine 6 to asparagine 66. Residues valine 95–tryptophan 132 adopt a coiled-coil conformation. Positions glutamate 108–glutamate 127 are enriched in basic and acidic residues. Residues glutamate 108–glutamate 131 are disordered.

It localises to the nucleus. In terms of biological role, probable transcription factor that controls female gametophyte (megagametogenesis) development and chloroplast biogenesis during embryo development. The sequence is that of Agamous-like MADS-box protein AGL23 from Arabidopsis thaliana (Mouse-ear cress).